The following is a 264-amino-acid chain: MYAQPKLTSAEYVQHHMSHWKLNLHNFTFTDGGFWTLNLDTLIISVVLGALFILIFYIIARRATASVPGKWQNAIEMAVEAVDGTVKDSFHGDRSLVAPLALTIFIWVFLMNFMDLVPVDLIPRLFQMGGVEHFKAVPTADPTLTFAMSITVFVLVVFYNFKMKGAIGLGKEVLSRPFGWYLMPINVIFRLIDEGVKPISLALRLFGNLFAGELIFILIALLPWWSQFTLGMVWTLFHLLVITVQAFIFMMLTVVYISLAAESH.

The next 5 membrane-spanning stretches (helical) occupy residues 39–59, 97–117, 139–159, 205–225, and 239–259; these read LDTL…FYII, VAPL…MDLV, TADP…VVFY, LFGN…LPWW, and LLVI…YISL.

This sequence belongs to the ATPase A chain family. As to quaternary structure, F-type ATPases have 2 components, CF(1) - the catalytic core - and CF(0) - the membrane proton channel. CF(1) has five subunits: alpha(3), beta(3), gamma(1), delta(1), epsilon(1). CF(0) has three main subunits: a(1), b(2) and c(9-12). The alpha and beta chains form an alternating ring which encloses part of the gamma chain. CF(1) is attached to CF(0) by a central stalk formed by the gamma and epsilon chains, while a peripheral stalk is formed by the delta and b chains.

Its subcellular location is the cell inner membrane. Functionally, key component of the proton channel; it plays a direct role in the translocation of protons across the membrane. In Coxiella burnetii (strain CbuG_Q212) (Coxiella burnetii (strain Q212)), this protein is ATP synthase subunit a.